Consider the following 404-residue polypeptide: BRCA1-A complex subunit Abraxas 1 (404 aa).

Positions 7–161 (YIRVSGFVLG…YAVYRSHGSQ (155 aa)) constitute an MPN domain. The stretch at 219-268 (MNNSLQGELKMACKKVEESERLVEKLLADVSDLRRMVNERKQELREISAD) forms a coiled coil. The disordered stretch occupies residues 339–404 (GRLGRGGGTS…NLDVSNSPVF (66 aa)). The segment covering 391–404 (RNGNNLDVSNSPVF) has biased composition (polar residues). Phosphoserine is present on Ser401. Residues 401–404 (SPVF) carry the pSXXF motif motif.

It belongs to the FAM175 family. Abraxas subfamily. In terms of assembly, component of the BRCA1-A complex. Component of the BRISC complex. Homodimer. Interacts directly (when phosphorylated at Ser-401) with brca1. The phosphorylated homodimer can interact directly with two brca1 chains, giving rise to a heterotetramer. Post-translationally, phosphorylation of Ser-401 of the pSXXF motif by ATM or ATR constitutes a specific recognition motif for the BRCT domain of BRCA1.

It localises to the nucleus. In terms of biological role, involved in DNA damage response and double-strand break (DSB) repair. Component of the BRCA1-A complex, acting as a central scaffold protein that assembles the various components of the complex and mediates the recruitment of brca1. The BRCA1-A complex specifically recognizes 'Lys-63'-linked ubiquitinated histones H2A and H2AX at DNA lesion sites, leading to target the brca1-bard1 heterodimer to sites of DNA damage at DSBs. This complex also possesses deubiquitinase activity that specifically removes 'Lys-63'-linked ubiquitin on histones H2A and H2AX. The polypeptide is BRCA1-A complex subunit Abraxas 1 (Salmo salar (Atlantic salmon)).